Consider the following 554-residue polypeptide: Malate synthase 1 (554 aa).

Residue R177 is the Proton acceptor of the active site. D457 acts as the Proton donor in catalysis. The SKL peroxisome targeting motif motif lies at 552-554; sequence SKL.

It belongs to the malate synthase family. In terms of assembly, interacts with PEX9.

It localises to the peroxisome matrix. It carries out the reaction glyoxylate + acetyl-CoA + H2O = (S)-malate + CoA + H(+). It functions in the pathway carbohydrate metabolism; glyoxylate cycle; (S)-malate from isocitrate: step 2/2. Functionally, malate synthase which takes part in the glyoxylate cycle. MLS1 activity is essential for cells to grow on oleic acid as a sole carbon source. Two steps of the glyoxylate cycle take place in the cytosol, the splitting of isocitrate into succinate and glyoxylate, and the dehydrogenation of malate to oxaloacetate. However, the formation of malate from glyoxylate and acetyl-CoA undertaken MLS1, occurs in the peroxisomes when cells are grown on oleic acid. The source of acetyl-CoA being either peroxisomal when breaking down fatty acids, or cytosolic when extra-cellular two-carbon substrates are used, therefore, although not strictly essential, the peroxisomal localization of MLS1 appears to be advantageous for cells growing on oleic acid, in that acetyl-CoA production and utilization are thereby intimately compartmentalized together to increase efficiency. This chain is Malate synthase 1, found in Saccharomyces cerevisiae (strain YJM789) (Baker's yeast).